Consider the following 271-residue polypeptide: Mannosyl-3-phosphoglycerate phosphatase (271 aa).

Catalysis depends on Asp-13, which acts as the Nucleophile. Residues Asp-13, Asp-15, and Asp-214 each contribute to the Mg(2+) site.

This sequence belongs to the HAD-like hydrolase superfamily. MPGP family. Mg(2+) serves as cofactor.

Its subcellular location is the cytoplasm. It carries out the reaction 2-O-(alpha-D-mannosyl)-3-phosphoglycerate + H2O = (2R)-2-O-(alpha-D-mannosyl)-glycerate + phosphate. The polypeptide is Mannosyl-3-phosphoglycerate phosphatase (Escherichia coli (strain SMS-3-5 / SECEC)).